The chain runs to 453 residues: Gamma-aminobutyric acid receptor subunit alpha-6 (453 aa).

The N-terminal stretch at 1–19 (MLLLLPWLFSLLWIENAQA) is a signal peptide. Residues 20 to 243 (QLEDEGNFYS…FHLQRKMGYF (224 aa)) lie on the Extracellular side of the membrane. Residue N31 is glycosylated (N-linked (GlcNAc...) asparagine). R84 serves as a coordination point for 4-aminobutanoate. Residues N128 and N141 are each glycosylated (N-linked (GlcNAc...) asparagine). A 4-aminobutanoate-binding site is contributed by T147. Residues C156 and C170 are joined by a disulfide bond. The helical transmembrane segment at 244-264 (MIQIYTPCIMTVILSQVSFWI) threads the bilayer. The Cytoplasmic portion of the chain corresponds to 265 to 270 (NKESVP). The helical transmembrane segment at 271-290 (ARTVFGITTVLTMTTLSISA) threads the bilayer. Over 291–304 (RHSLPKVSYATAMD) the chain is Extracellular. The helical transmembrane segment at 305–325 (WFIAVCFAFVFSALIEFAAVN) threads the bilayer. Residues 326-422 (YFTNLQSQKA…GTSKIDQYSR (97 aa)) are Cytoplasmic-facing. Residue S375 is modified to Phosphoserine. At T403 the chain carries Phosphothreonine. Residues 423 to 443 (ILFPVAFAGFNLVYWIVYLSK) traverse the membrane as a helical segment. The Extracellular segment spans residues 444–453 (DTMEVSSTVE).

The protein belongs to the ligand-gated ion channel (TC 1.A.9) family. Gamma-aminobutyric acid receptor (TC 1.A.9.5) subfamily. GABRA6 sub-subfamily. Heteropentamer, formed by a combination of alpha (GABRA1-6), beta (GABRB1-3), gamma (GABRG1-3), delta (GABRD), epsilon (GABRE), rho (GABRR1-3), pi (GABRP) and theta (GABRQ) chains, each subunit exhibiting distinct physiological and pharmacological properties. Binds UBQLN1. As to expression, expressed in brain, in cerebellar granule cells.

The protein resides in the postsynaptic cell membrane. Its subcellular location is the cell membrane. The enzyme catalyses chloride(in) = chloride(out). In terms of biological role, alpha subunit of the heteropentameric ligand-gated chloride channel gated by gamma-aminobutyric acid (GABA), a major inhibitory neurotransmitter in the brain. GABA-gated chloride channels, also named GABA(A) receptors (GABAAR), consist of five subunits arranged around a central pore and contain GABA active binding site(s) located at the alpha and beta subunit interface(s). When activated by GABA, GABAARs selectively allow the flow of chloride anions across the cell membrane down their electrochemical gradient. Alpha-6/GABRA6 subunits are found at both synaptic and extrasynaptic sites. Chloride influx into the postsynaptic neuron following GABAAR opening decreases the neuron ability to generate a new action potential, thereby reducing nerve transmission. Extrasynaptic alpha-6-containing receptors contribute to the tonic GABAergic inhibition. Alpha-6 subunits are also present on glutamatergic synapses. The polypeptide is Gamma-aminobutyric acid receptor subunit alpha-6 (Rattus norvegicus (Rat)).